The primary structure comprises 271 residues: Insulin-like growth factor-binding protein 5 (271 aa).

Residues 1-19 (MVLTAVLLLLAACAGPAQG) form the signal peptide. The 81-residue stretch at 22–102 (SFVHCEPCDE…LHGRGVCLNE (81 aa)) folds into the IGFBP N-terminal domain. Intrachain disulfides connect Cys26/Cys52, Cys29/Cys54, Cys37/Cys55, Cys44/Cys58, Cys66/Cys79, and Cys73/Cys99. Basic and acidic residues predominate over residues 109–121 (AKIERDSREHEEP). Positions 109-129 (AKIERDSREHEEPTTSEMAEE) are disordered. Phosphoserine is present on Ser115. The Thyroglobulin type-1 domain occupies 188–262 (QGPCRRHMEA…MEYVDGDFQC (75 aa)). 3 cysteine pairs are disulfide-bonded: Cys191/Cys218, Cys229/Cys240, and Cys242/Cys262.

Interacts with IGF1; this interaction enhances the growth stimulatory effects of IGF1 on fibroblasts. Interacts with CAV1; this interaction allows trafficking of IGFBP5 from the plasma membrane to the nucleus. Interacts with NCL; this interaction is necessary for IGFBP5 localization to the nucleus.

It localises to the secreted. The protein localises to the cytoplasm. The protein resides in the nucleus. Functionally, multifunctional protein that plays a critical role in regulating the availability of IGFs to their receptors and thereby regulates IGF-mediated cellular processes including proliferation, differentiation, and apoptosis in a cell-type specific manner. Increases the cell proliferation of osteoblasts, intestinal smooth muscle cells and neuroblastoma cells. Enhances adhesion and survival of epithelial cells but decreases adhesion of mesenchymal cells. Once secreted, acts as a major mediator of mTORC1-dependent feedback inhibition of IGF1 signaling. Also plays a role in the induction of extracellular matrix (ECM) production and deposition independently of its nuclear translocation and binding to IGFs. Acts itself as a growth factor that can act independently of IGFs to regulate bone formation. Acts as a ligand for the ROR1 receptor which triggers formation of ROR1/HER2 heterodimer to enhance CREB oncogenic signaling. This Sus scrofa (Pig) protein is Insulin-like growth factor-binding protein 5 (IGFBP5).